A 331-amino-acid chain; its full sequence is Phosphoenolpyruvate transferase (331 aa).

A 7,8-didemethyl-8-hydroxy-5-deazariboflavin-binding site is contributed by Asp-63.

This sequence belongs to the CofD family. In terms of assembly, homodimer. Requires Mg(2+) as cofactor.

It carries out the reaction enolpyruvoyl-2-diphospho-5'-guanosine + 7,8-didemethyl-8-hydroxy-5-deazariboflavin = dehydro coenzyme F420-0 + GMP + H(+). It functions in the pathway cofactor biosynthesis; coenzyme F420 biosynthesis. Its function is as follows. Catalyzes the transfer of the phosphoenolpyruvate moiety from enoylpyruvoyl-2-diphospho-5'-guanosine (EPPG) to 7,8-didemethyl-8-hydroxy-5-deazariboflavin (FO) with the formation of dehydro coenzyme F420-0 and GMP. This Mycobacterium bovis (strain ATCC BAA-935 / AF2122/97) protein is Phosphoenolpyruvate transferase.